Reading from the N-terminus, the 232-residue chain is Ribose-5-phosphate isomerase A (232 aa).

Substrate is bound by residues 31–34 (TGST), 87–90 (DGAD), and 100–103 (KGGG). Catalysis depends on Glu109, which acts as the Proton acceptor. Lys127 serves as a coordination point for substrate.

This sequence belongs to the ribose 5-phosphate isomerase family. As to quaternary structure, homodimer.

It catalyses the reaction aldehydo-D-ribose 5-phosphate = D-ribulose 5-phosphate. It participates in carbohydrate degradation; pentose phosphate pathway; D-ribose 5-phosphate from D-ribulose 5-phosphate (non-oxidative stage): step 1/1. Functionally, catalyzes the reversible conversion of ribose-5-phosphate to ribulose 5-phosphate. In Bifidobacterium adolescentis (strain ATCC 15703 / DSM 20083 / NCTC 11814 / E194a), this protein is Ribose-5-phosphate isomerase A.